Here is a 551-residue protein sequence, read N- to C-terminus: MTITYTNKVANARLGSFSSLLLCWRGSIYKLLYGEFLVFIFLYYSIRGLYRMVLSSDQQLLFEKLALYCDSYIQLIPISFVLGFYVTLVVSRWWSQYENLPWPDRLMIQVSSFVEGKDEEGRLLRRTLIRYAILGQVLILRSISTSVYKRFPTLHHLVLAGFMTHGEHKQLQKLGLPHNTFWVPWVWFANLSMKAYLGGRIRDTVLLQSLMNEVCTLRTQCGQLYAYDWISIPLVYTQVVTVAVYSFFLACLIGRQFLNPNKDYPGHEMDLVVPVFTILQFLFYMGWLKVAEQLINPFGEDDDDFETNWIIDRNLQVSLLSVDGMHQNLPPMERDMYWNEAAPQPPYTAASARSRRHSFMGSTFNISLKKEDLELWSKEEADTDKKESGYSSTIGCFLGLQPKNYHLPLKDLKTKLLCSKNPLLEGQCKDANQKNQKDVWKFKGLDFLKCVPRFKRRGSHCGPQAPSSHPTEQSAPSSSDTGDGPSTDYQEICHMKKKTVEFNLNIPESPTEHLQQRRLDQMSTNIQALMKEHAESYPYRDEAGTKPVLYE.

Residues 1 to 31 (MTITYTNKVANARLGSFSSLLLCWRGSIYKL) lie on the Cytoplasmic side of the membrane. Ala10 contacts Ca(2+). The chain crosses the membrane as a helical span at residues 32 to 51 (LYGEFLVFIFLYYSIRGLYR). At 52–60 (MVLSSDQQL) the chain is on the extracellular side. Residues 61 to 82 (LFEKLALYCDSYIQLIPISFVL) traverse the membrane as a helical segment. Residues 83 to 237 (GFYVTLVVSR…DWISIPLVYT (155 aa)) are Cytoplasmic-facing. A helical transmembrane segment spans residues 238–255 (QVVTVAVYSFFLACLIGR). Residues 256–274 (QFLNPNKDYPGHEMDLVVP) lie on the Extracellular side of the membrane. The chain crosses the membrane as a helical span at residues 275-288 (VFTILQFLFYMGWL). Residues 289–551 (KVAEQLINPF…EAGTKPVLYE (263 aa)) lie on the Cytoplasmic side of the membrane. Residues Gln293, Asn296, Asp301, and Asp304 each coordinate Ca(2+). The auto-inhibitory segment stretch occupies residues 346-379 (PYTAASARSRRHSFMGSTFNISLKKEDLELWSKE). The tract at residues 459–489 (SHCGPQAPSSHPTEQSAPSSSDTGDGPSTDY) is disordered. Over residues 465–475 (APSSHPTEQSA) the composition is skewed to polar residues. The span at 476 to 488 (PSSSDTGDGPSTD) shows a compositional bias: low complexity.

It belongs to the anion channel-forming bestrophin (TC 1.A.46) family. Calcium-sensitive chloride channel subfamily. Interacts with YWHAG; this interaction promotes the ligand-gated L-glutamate channel activity leading to the positive regulation of NMDA glutamate receptor activity through the L-glutamate secretion.

It localises to the cell membrane. The protein resides in the basolateral cell membrane. The enzyme catalyses 4-aminobutanoate(in) = 4-aminobutanoate(out). It catalyses the reaction L-glutamate(out) = L-glutamate(in). The catalysed reaction is chloride(in) = chloride(out). It carries out the reaction hydrogencarbonate(in) = hydrogencarbonate(out). The enzyme catalyses D-serine(in) = D-serine(out). With respect to regulation, inactivated by sulfhydryl-reactive agents. Its function is as follows. Ligand-gated anion channel that allows the movement of anions across cell membranes when activated by calcium (Ca2+). Allows the movement of chloride and hydrogencarbonate. Found in a partially open conformation leading to significantly smaller chloride movement. Upon F2R/PAR-1 activation, the sequestered calcium is released into the cytosol of astrocytes, leading to the (Ca2+)-dependent release of L-glutamate into the synaptic cleft that targets the neuronal postsynaptic GRIN2A/NMDAR receptor resulting in the synaptic plasticity regulation. Upon activation of the norepinephrine-alpha-1 adrenergic receptor signaling pathway, transports as well D-serine than L-glutamate in a (Ca2+)-dependent manner, leading to activation of adjacent NMDAR receptors and therefore regulates the heterosynaptic long-term depression and metaplasticity during initial memory acquisition. Releases the 4-aminobutanoate neurotransmitter in a (Ca2+)-dependent manner, and participates in its tonic release from cerebellar glial cells. The chain is Bestrophin-1 from Mus musculus (Mouse).